Here is a 510-residue protein sequence, read N- to C-terminus: MIWHVQNENFILDSTRIFMKAFHLLLFDGSFIFPECILIFGLILLLMIDSTSDQKDMPWLYFISSTSLVMSITALLFRWREEPMISFSGNFQTNNFNEIFQFLILLCSTLCIPLSVEYIECTEMAITEFLLFVLTATLGGMFLCGANDLITIFVAPECFSLCSYLLSGYTKKDVRSNEATTKYLLMGGASSSILVHGFSWLYGSSGGEIELQEIVNGLINTQMYNSPGISIALIFITVGIGFKLSPAPSHQWTPDVYEGSPTPVVAFLSVTSKVAASASATRIFDIPFYFSSNEWHLLLEILAILSMIVGNLIAITQTSMKRMLAYSSIGQIGYVIIGIIVGDSNGGYASMITYMLFYISMNLGTFACIVLFGLRTGTDNIRDYAGLYTKDPFLALSLALCLLSLGGLPPLAGFFGKLHLFWCGWQAGLYFLVSIGLLTSVLSIYYYLKIIKLLMTGQNQEITPHVRNYRGSPLRSNNSIELSMIVCVIASTIPGISMSPIIEIAQDTLF.

Transmembrane regions (helical) follow at residues 24-44, 57-77, 99-119, 124-144, 149-169, 183-203, 227-247, 295-315, 323-343, 354-374, 395-415, 418-438, and 482-502; these read LLLF…GLIL, MPWL…ALLF, IFQF…VEYI, MAIT…MFLC, LITI…LSGY, YLLM…WLYG, PGIS…LSPA, WHLL…LIAI, MLAY…IVGD, YMLF…LFGL, ALSL…AGFF, LHLF…IGLL, and LSMI…SPII.

Belongs to the complex I subunit 2 family. In terms of assembly, NDH is composed of at least 16 different subunits, 5 of which are encoded in the nucleus.

The protein resides in the plastid. Its subcellular location is the chloroplast thylakoid membrane. It catalyses the reaction a plastoquinone + NADH + (n+1) H(+)(in) = a plastoquinol + NAD(+) + n H(+)(out). The enzyme catalyses a plastoquinone + NADPH + (n+1) H(+)(in) = a plastoquinol + NADP(+) + n H(+)(out). Functionally, NDH shuttles electrons from NAD(P)H:plastoquinone, via FMN and iron-sulfur (Fe-S) centers, to quinones in the photosynthetic chain and possibly in a chloroplast respiratory chain. The immediate electron acceptor for the enzyme in this species is believed to be plastoquinone. Couples the redox reaction to proton translocation, and thus conserves the redox energy in a proton gradient. In Populus trichocarpa (Western balsam poplar), this protein is NAD(P)H-quinone oxidoreductase subunit 2 A, chloroplastic.